The chain runs to 526 residues: MWSKRDEQKTYPPIRLNPFVFWSSAISISIFGMLFVLFPETSQHGLTWIQQQVNQLFGWYYMLVIILSLGFVAWLAFSQVGNIPLGKAQDKPEFGYLVWTSMLFSAGIGIALLYYGVAEPVDHFLRPPEGQGGTVEAAQNAMMYSFLHWGIHGWVLYALVGVTLGYFAFRRDLPLALRSALYPIFGERIHGLVGHMVDGFGILATIISLVTNLGIGALVMISGISYLFPDLPNTSSTLVVTVIMMMLVATLTTVIGIEKGLAWLSRINLRLLYLLLLFVFLTGPTNHLLNGLVQNTGDYLSHFVQKSFDLYLYDKNATGWLASWTIFYWAWWIAWAPFVGMFIARISKGRTIREVVLGVCLIPLGFTLAWISIFGNTAIDLILNHGQQIIGSLVIQDPALSLFKLLEYLPFHPYVAGIVVVICFVLFLTPVGSGTLMIANLSSQGGSSDSDSPIWLRVFWSIAITIVSIGLLLAGSFSAMQSAVVLCGLPFSVILLLYMFGLAKALKQETQQPVVESHTTETSGSD.

Residues 1-17 (MWSKRDEQKTYPPIRLN) lie on the Cytoplasmic side of the membrane. The helical transmembrane segment at 18–38 (PFVFWSSAISISIFGMLFVLF) threads the bilayer. At 39-56 (PETSQHGLTWIQQQVNQL) the chain is on the periplasmic side. A helical membrane pass occupies residues 57 to 77 (FGWYYMLVIILSLGFVAWLAF). Residues 78-93 (SQVGNIPLGKAQDKPE) are Cytoplasmic-facing. The helical transmembrane segment at 94–114 (FGYLVWTSMLFSAGIGIALLY) threads the bilayer. The Periplasmic segment spans residues 115-148 (YGVAEPVDHFLRPPEGQGGTVEAAQNAMMYSFLH). The helical transmembrane segment at 149-169 (WGIHGWVLYALVGVTLGYFAF) threads the bilayer. At 170–200 (RRDLPLALRSALYPIFGERIHGLVGHMVDGF) the chain is on the cytoplasmic side. A helical transmembrane segment spans residues 201 to 221 (GILATIISLVTNLGIGALVMI). The Periplasmic segment spans residues 222–236 (SGISYLFPDLPNTSS). Residues 237-257 (TLVVTVIMMMLVATLTTVIGI) traverse the membrane as a helical segment. At 258–272 (EKGLAWLSRINLRLL) the chain is on the cytoplasmic side. The helical transmembrane segment at 273 to 293 (YLLLLFVFLTGPTNHLLNGLV) threads the bilayer. Over 294–323 (QNTGDYLSHFVQKSFDLYLYDKNATGWLAS) the chain is Periplasmic. The helical transmembrane segment at 324–344 (WTIFYWAWWIAWAPFVGMFIA) threads the bilayer. The Cytoplasmic segment spans residues 345–354 (RISKGRTIRE). A helical transmembrane segment spans residues 355-375 (VVLGVCLIPLGFTLAWISIFG). Residues 376-417 (NTAIDLILNHGQQIIGSLVIQDPALSLFKLLEYLPFHPYVAG) lie on the Periplasmic side of the membrane. A helical membrane pass occupies residues 418–438 (IVVVICFVLFLTPVGSGTLMI). Residues 439–457 (ANLSSQGGSSDSDSPIWLR) are Cytoplasmic-facing. A helical membrane pass occupies residues 458–478 (VFWSIAITIVSIGLLLAGSFS). At 479–482 (AMQS) the chain is on the periplasmic side. The helical transmembrane segment at 483–503 (AVVLCGLPFSVILLLYMFGLA) threads the bilayer. Topologically, residues 504 to 526 (KALKQETQQPVVESHTTETSGSD) are cytoplasmic.

The protein belongs to the BCCT transporter (TC 2.A.15) family.

The protein resides in the cell inner membrane. Its function is as follows. Sodium-independent high-affinity choline uptake system. Uptake is not proton coupled. May play a role in metabolic adaptation to choline-containing environments. This chain is Osmo-independent choline transporter BetT1, found in Acinetobacter baylyi (strain ATCC 33305 / BD413 / ADP1).